The chain runs to 428 residues: Metal tolerance protein 10 (428 aa).

The Cytoplasmic portion of the chain corresponds to 1–140 (MPLNSYIFFL…EMKKLAKSER (140 aa)). A helical membrane pass occupies residues 141 to 161 (LAVHISNATNLVLFVAKVYAS). The Vacuolar portion of the chain corresponds to 162–167 (MESRSM). The chain crosses the membrane as a helical span at residues 168 to 188 (AVIASTLDSLLDLLSGFILWF). Over 189-209 (TANAMRKPNQFHYPIGKRRMQ) the chain is Cytoplasmic. Residues 210–230 (PVGIIVFASVMATLGLQVLLE) form a helical membrane-spanning segment. The Vacuolar portion of the chain corresponds to 231–248 (SGRQLVAKSGIHMNSTEE). Residues 249 to 269 (KWMIGIMVSVTIVKFLLMLYC) form a helical membrane-spanning segment. Over 270-287 (RGFQNEIVRAYAQDHLFD) the chain is Cytoplasmic. The helical transmembrane segment at 288 to 308 (VVTNSIGLATAVLAVKFYWWI) threads the bilayer. The Vacuolar segment spans residues 309–311 (DPT). Residues 312 to 332 (GAILIALYTIATWARTVLENV) form a helical membrane-spanning segment. The Cytoplasmic segment spans residues 333 to 428 (HSLIGRSAPP…FTHRPEHKCN (96 aa)).

This sequence belongs to the cation diffusion facilitator (CDF) transporter (TC 2.A.4) family. SLC30A subfamily.

It is found in the vacuole membrane. Involved in sequestration of excess metal in the cytoplasm into vacuoles to maintain metal homeostasis. The protein is Metal tolerance protein 10 (MTP10) of Arabidopsis thaliana (Mouse-ear cress).